Reading from the N-terminus, the 689-residue chain is Protein asunder (689 aa).

Positions 521–550 form a coiled coil; sequence NGARLKLSKAKDQYRLLYRELEQLIQLNAT. Disordered regions lie at residues 592-619 and 665-689; these read PERL…SKRR and GTKD…SVRS. A compositionally biased stretch (low complexity) spans 599–614; the sequence is SSVGASGSSSSNSLLK. The Nuclear localization signal (NLS) motif lies at 613 to 619; that stretch reads LKASKRR.

The protein belongs to the Integrator subunit 13 family. As to quaternary structure, belongs to the multiprotein complex Integrator, at least composed of IntS1, IntS2, IntS3, IntS4, omd/IntS5, IntS6, defl/IntS7, IntS8, IntS9, IntS10, IntS11, IntS12, asun/IntS13, IntS14 and IntS15. The core complex associates with protein phosphatase 2A subunits mts/PP2A and Pp2A-29B, to form the Integrator-PP2A (INTAC) complex. Post-translationally, phosphorylated. Expressed in nurse cells at stages 9-10 of oogenesis and exported to the oocyte. Also expressed in the follicle cells surrounding the oocyte.

Its subcellular location is the nucleus. The protein localises to the cytoplasm. It is found in the perinuclear region. Functionally, component of the integrator complex, a multiprotein complex that terminates RNA polymerase II (Pol II) transcription in the promoter-proximal region of genes. The integrator complex provides a quality checkpoint during transcription elongation by driving premature transcription termination of transcripts that are unfavorably configured for transcriptional elongation: the complex terminates transcription by (1) catalyzing dephosphorylation of the C-terminal domain (CTD) of Pol II subunit Polr2A/Rbp1 and Spt5, and (2) degrading the exiting nascent RNA transcript via endonuclease activity. The integrator complex is also involved in the 3'-end processing of the U7 snRNA, and also the spliceosomal snRNAs U1, U2, U4 and U5. Plays a role as a regulator of spermatogenesis. Crucial regulator of the mitotic cell cycle and development. Required for the correct dynein-dynactin perinuclear localization important for nucleus-centrosome coupling that occur upon meiotic progression of primary spermatocytes. Plays a role in sperm motility and fertility. May have a role in the PNG/PLU/GNU pathway. This is Protein asunder from Drosophila melanogaster (Fruit fly).